Here is a 438-residue protein sequence, read N- to C-terminus: Serine hydroxymethyltransferase (438 aa).

Residues Leu133 and 137–139 (GHL) each bind (6S)-5,6,7,8-tetrahydrofolate. An N6-(pyridoxal phosphate)lysine modification is found at Lys242.

The protein belongs to the SHMT family. As to quaternary structure, homodimer. Requires pyridoxal 5'-phosphate as cofactor.

It localises to the cytoplasm. It catalyses the reaction (6R)-5,10-methylene-5,6,7,8-tetrahydrofolate + glycine + H2O = (6S)-5,6,7,8-tetrahydrofolate + L-serine. It functions in the pathway one-carbon metabolism; tetrahydrofolate interconversion. The protein operates within amino-acid biosynthesis; glycine biosynthesis; glycine from L-serine: step 1/1. In terms of biological role, catalyzes the reversible interconversion of serine and glycine with tetrahydrofolate (THF) serving as the one-carbon carrier. This reaction serves as the major source of one-carbon groups required for the biosynthesis of purines, thymidylate, methionine, and other important biomolecules. Also exhibits THF-independent aldolase activity toward beta-hydroxyamino acids, producing glycine and aldehydes, via a retro-aldol mechanism. In Brucella abortus (strain S19), this protein is Serine hydroxymethyltransferase.